Consider the following 292-residue polypeptide: Aspartate carbamoyltransferase catalytic subunit (292 aa).

The carbamoyl phosphate site is built by Arg50 and Thr51. Lys78 is an L-aspartate binding site. Carbamoyl phosphate contacts are provided by Arg100, His128, and Gln131. L-aspartate contacts are provided by Arg161 and Arg211. 2 residues coordinate carbamoyl phosphate: Gly250 and Pro251.

It belongs to the aspartate/ornithine carbamoyltransferase superfamily. ATCase family. In terms of assembly, heterododecamer (2C3:3R2) of six catalytic PyrB chains organized as two trimers (C3), and six regulatory PyrI chains organized as three dimers (R2).

It carries out the reaction carbamoyl phosphate + L-aspartate = N-carbamoyl-L-aspartate + phosphate + H(+). It participates in pyrimidine metabolism; UMP biosynthesis via de novo pathway; (S)-dihydroorotate from bicarbonate: step 2/3. In terms of biological role, catalyzes the condensation of carbamoyl phosphate and aspartate to form carbamoyl aspartate and inorganic phosphate, the committed step in the de novo pyrimidine nucleotide biosynthesis pathway. The sequence is that of Aspartate carbamoyltransferase catalytic subunit from Nitratiruptor sp. (strain SB155-2).